Reading from the N-terminus, the 196-residue chain is DnaA initiator-associating protein DiaA (196 aa).

The region spanning 34–196 (LVQSLLNGNK…DNTLFPHQDD (163 aa)) is the SIS domain.

The protein belongs to the SIS family. DiaA subfamily. As to quaternary structure, homotetramer; dimer of dimers.

Required for the timely initiation of chromosomal replication via direct interactions with the DnaA initiator protein. The polypeptide is DnaA initiator-associating protein DiaA (Shigella flexneri serotype 5b (strain 8401)).